The primary structure comprises 577 residues: Isocitrate dehydrogenase kinase/phosphatase (577 aa).

Residues 318 to 324 (APGVRGM) and Lys-339 contribute to the ATP site. The active site involves Asp-374.

The protein belongs to the AceK family.

The protein resides in the cytoplasm. It catalyses the reaction L-seryl-[isocitrate dehydrogenase] + ATP = O-phospho-L-seryl-[isocitrate dehydrogenase] + ADP + H(+). Bifunctional enzyme which can phosphorylate or dephosphorylate isocitrate dehydrogenase (IDH) on a specific serine residue. This is a regulatory mechanism which enables bacteria to bypass the Krebs cycle via the glyoxylate shunt in response to the source of carbon. When bacteria are grown on glucose, IDH is fully active and unphosphorylated, but when grown on acetate or ethanol, the activity of IDH declines drastically concomitant with its phosphorylation. The sequence is that of Isocitrate dehydrogenase kinase/phosphatase from Pseudomonas aeruginosa (strain UCBPP-PA14).